A 339-amino-acid chain; its full sequence is NADH-quinone oxidoreductase subunit H (339 aa).

9 consecutive transmembrane segments (helical) span residues 10–30, 50–70, 82–102, 115–135, 161–181, 187–207, 235–255, 275–295, and 311–331; these read FPLTVIALKVVAITIPLILCV, PNVVGPFGLLQPIADAVKLLF, ILFILAPIITFVLSLIGWAVI, VGVLYILAISSLSVYGIIIAG, MGLVIITVLLTTGTLNLSGII, LPWWIDLMLLPMSIVFFISVL, MGFALFFLGEYANMILVSAMT, IPGFFWFVFKVGFLLFCFLWI, and GWKVFLPFTLFGVVLVSSVLF.

It belongs to the complex I subunit 1 family. As to quaternary structure, NDH-1 is composed of 14 different subunits. Subunits NuoA, H, J, K, L, M, N constitute the membrane sector of the complex.

The protein localises to the cell inner membrane. It catalyses the reaction a quinone + NADH + 5 H(+)(in) = a quinol + NAD(+) + 4 H(+)(out). In terms of biological role, NDH-1 shuttles electrons from NADH, via FMN and iron-sulfur (Fe-S) centers, to quinones in the respiratory chain. The immediate electron acceptor for the enzyme in this species is believed to be ubiquinone. Couples the redox reaction to proton translocation (for every two electrons transferred, four hydrogen ions are translocated across the cytoplasmic membrane), and thus conserves the redox energy in a proton gradient. This subunit may bind ubiquinone. The protein is NADH-quinone oxidoreductase subunit H of Rickettsia prowazekii (strain Madrid E).